The chain runs to 704 residues: Capsule polysaccharide modification protein LipA (704 aa).

The protein resides in the cell inner membrane. Functionally, involved in the phospholipid modification of the capsular polysaccharide, a strong requirement for its translocation to the cell surface. The sequence is that of Capsule polysaccharide modification protein LipA (lipA) from Neisseria meningitidis serogroup B (strain ATCC BAA-335 / MC58).